The chain runs to 182 residues: Small ribosomal subunit protein uS4c (182 aa).

The S4 RNA-binding domain occupies 82-143 (MRLDNILFRL…KQRSKALIQN (62 aa)).

It belongs to the universal ribosomal protein uS4 family. Part of the 30S ribosomal subunit. Contacts protein S5. The interaction surface between S4 and S5 is involved in control of translational fidelity.

Its subcellular location is the plastid. It is found in the chloroplast. In terms of biological role, one of the primary rRNA binding proteins, it binds directly to 16S rRNA where it nucleates assembly of the body of the 30S subunit. Functionally, with S5 and S12 plays an important role in translational accuracy. The polypeptide is Small ribosomal subunit protein uS4c (rps4) (Iris domestica (Leopard lily)).